Here is a 1730-residue protein sequence, read N- to C-terminus: MEGKGTENPCSRTLGWFHQDNDAKPWLWKFSGCFSRPEQTLPLSSQTKEYMENKKAAVELKDIPSPLHVGSKFFPAVPLPDIRSLQQPKVQLSAIPKVSCCAHCPNEPSTSPMRFGGGSGSSGGSGSLIHTGSLLDSPSTGTVTCQVGSGFAFQSVSSLQNASTRNNLVGLSSDFPSMCVESNLPSCKHLSCCGKLHFQSCHSNVHKLHQFQNLQGCASAGYFPCSDFPSGAPGHLEERLSHSELTPHLCTNSLHLNVAPPVCLKGSLYCEDCLNKPARNSIIDAAKIWPNIPPPSTQPAPPAIPVCNGCGTKGMEKETSLLLATSLGKTASKFGSPEVAVTGQVLETLPPIGVFWDIENCSVPSGRSATTVVQRIREKFFRGHREAEFICVCDISKENKEVIQELNNCQVTVAHINATAKNAADDKLRQSLRRFANTHTAPATVVLVSTDVNFALELSDLRHRHGFHIILVHKNQASEALLHHANQLIRFEEFISDLPPRLPLKIPQCHTLLYVYNLPANKDGKSISNRLRRLSDNCGGKVLSITGCSAILRFINQDSAERAQKRMENEDVFGNRIIVSFTPKHREFFEAKSSNAIADKVKSPKKVKNTKLCLIKDTSEQSPSVKAMPGKVLQANSGSATKTTNIKSLQELCRMESKSGNRNSDHQQGHGRLAALPNSGPTASVPIVKNTGVTEPLYRSSQKKENPSSQSTVNSPVEKKKREETVFQVSYPSAFSKLIASRQVSPLLTSQSWSPRASPLAFNIANPSSGADCPDPFANGVDIQVSNVDYRLSRKELQQLLQEAFSKHGQVKSVELSPHTDYQLKAIVQMRNLHEAICAVNSLHRHKIGSKKILVSLSTGAANKSLSLLSTETMSILQDAPACCLPLFKFIDIYEKKYGHKLNVSDLYKLTDTIAIREQGNGRLVCLLPSNQARQSPLGSSQSHDGSSSNCSPVLFEELEYHEPVCKQHCSNKDFSELVFDPDSYKIPFVVLSLKVFAPQVHSLLQTHQGTVPLLSFPDCYAAEFGDLEITQDSHKGVPLEHFITCIPGVNIATAQNGVKVVKWIHNKPPPPNTDPWLLRSKSPVRNPQLIQFSREVIDLLKTQPSCILPVSNFIPSYHHHFGKQCRVSDYGYSKLIELLEAVPHVLQILGMGSKRLMTLTHRAQVKRFTQDLLKLLKSQASKQVIVRDFSQAYHWCFSKDWDVTEYGVCDLIDIISEIPDTTICLSQQDDDMVICIRKRERTQDEIERTKQFSKDVVDLLRHQPHFRMPFNKFIPSYHHHFGRQCKLAYYGFTKLLELLEAIPEILQVLECGEEKILTLTEVERFKALAAQFVKLLRSQKGNCLMMTDLFTEYAKTFGYTFRLQDYDVSSVSALTQKLCHVVKVADMESGKQIQLINRKSLRSLTAQLLVLLMSWEGDAYLPVDELRRHYETTHSTPLNPCEYGFMTLTELLKSLPYLVEVCTNDKAEEYVKLTSLYLFAKNVRSLLHTYHYQQIFLHEFSMAYNKYVGETLQPKTYGYSSVEELLGAIPQVVWIKGHGHKRIVVLKNDMKNRLSSFDLFSVNHEDQPAVSRQILAVPESHLASELQLRTGTGPSQMEQELLHLASSSPVDLLCAPVPSCLPSPQLRPDPVILKPADLIQFEEHPQEPLGVLVLNQEEKSEVPLPVQKGNLSCDSSPSSPAASPAPPGPSSEAPRPLFSKDAVESPAKKQPKNRVKLAANFSFAPVTKL.

Ser-65 carries the post-translational modification Phosphoserine. The NYN domain maps to 352-489 (IGVFWDIENC…ALLHHANQLI (138 aa)). Over residues 655–668 (MESKSGNRNSDHQQ) the composition is skewed to basic and acidic residues. The disordered stretch occupies residues 655–722 (MESKSGNRNS…VNSPVEKKKR (68 aa)). Phosphotyrosine is present on Tyr-698. The RRM domain occupies 781–860 (VDIQVSNVDY…KKILVSLSTG (80 aa)). 2 HTH OST-type domains span residues 865-939 (SLSL…SPLG) and 993-1069 (SLKV…HNKP). Phosphoserine is present on residues Ser-1081 and Ser-1083. 6 consecutive HTH OST-type domains span residues 1089–1163 (QLIQ…LTHR), 1165–1241 (QVKR…RKRE), 1249–1324 (RTKQ…TEVE), 1325–1400 (RFKA…INRK), 1401–1475 (SLRS…VKLT), and 1476–1550 (SLYL…LKND). The tract at residues 1667–1714 (VQKGNLSCDSSPSSPAASPAPPGPSSEAPRPLFSKDAVESPAKKQPKN) is disordered. Phosphoserine is present on Ser-1684.

Interacts with LIMK2. In terms of tissue distribution, predominantly present in oocytes and barely detectable in granulosa cells (at protein level).

The protein resides in the peroxisome. Functionally, essential regulator of oogenesis required for female meiotic progression to repress transposable elements and preventing their mobilization, which is essential for the germline integrity. Probably acts via some RNA metabolic process, equivalent to the piRNA system in males, which mediates the repression of transposable elements during meiosis by forming complexes composed of RNAs and governs the methylation and subsequent repression of transposons. Also required to protect from DNA double-strand breaks. In Mus musculus (Mouse), this protein is Meiosis regulator and mRNA stability factor 1 (Marf1).